The chain runs to 601 residues: DNA ligase 2 (601 aa).

E263 is a binding site for ATP. K265 acts as the N6-AMP-lysine intermediate in catalysis. The ATP site is built by R270, R285, E314, F354, R432, and K438.

It belongs to the ATP-dependent DNA ligase family. The cofactor is Mg(2+).

It catalyses the reaction ATP + (deoxyribonucleotide)n-3'-hydroxyl + 5'-phospho-(deoxyribonucleotide)m = (deoxyribonucleotide)n+m + AMP + diphosphate.. Functionally, DNA ligase that seals nicks in double-stranded DNA during DNA replication, DNA recombination and DNA repair. The chain is DNA ligase 2 from Thermofilum pendens (strain DSM 2475 / Hrk 5).